The following is a 170-amino-acid chain: Ribosome maturation factor RimM (170 aa).

The PRC barrel domain occupies Pro98–Phe170.

This sequence belongs to the RimM family. In terms of assembly, binds ribosomal protein uS19.

The protein resides in the cytoplasm. Its function is as follows. An accessory protein needed during the final step in the assembly of 30S ribosomal subunit, possibly for assembly of the head region. Essential for efficient processing of 16S rRNA. May be needed both before and after RbfA during the maturation of 16S rRNA. It has affinity for free ribosomal 30S subunits but not for 70S ribosomes. The sequence is that of Ribosome maturation factor RimM from Xanthomonas oryzae pv. oryzae (strain MAFF 311018).